A 118-amino-acid polypeptide reads, in one-letter code: Hydrogenase maturation factor HypA (118 aa).

Histidine 2 serves as a coordination point for Ni(2+). Zn(2+)-binding residues include cysteine 73, cysteine 76, cysteine 89, and cysteine 92.

It belongs to the HypA/HybF family.

Involved in the maturation of [NiFe] hydrogenases. Required for nickel insertion into the metal center of the hydrogenase. The chain is Hydrogenase maturation factor HypA from Shewanella oneidensis (strain ATCC 700550 / JCM 31522 / CIP 106686 / LMG 19005 / NCIMB 14063 / MR-1).